The following is a 206-amino-acid chain: Venom allergen 5 (206 aa).

4 cysteine pairs are disulfide-bonded: cysteine 5–cysteine 18, cysteine 9–cysteine 103, cysteine 28–cysteine 96, and cysteine 172–cysteine 189. The region spanning 47–191 (LKVHNDFRQK…WYTHYLVCNY (145 aa)) is the SCP domain.

It belongs to the CRISP family. Venom allergen 5-like subfamily. In terms of tissue distribution, expressed by the venom gland.

The protein resides in the secreted. In Vespula vidua (Ground hornet), this protein is Venom allergen 5.